The following is a 130-amino-acid chain: Protein ApaG (130 aa).

The region spanning 3–127 is the ApaG domain; that stretch reads KAETRGIMVT…FSLDSPHLRR (125 aa).

The polypeptide is Protein ApaG (Methylorubrum extorquens (strain CM4 / NCIMB 13688) (Methylobacterium extorquens)).